A 306-amino-acid polypeptide reads, in one-letter code: D-glucosamine-6-phosphate 4-epimerase (306 aa).

One can recognise an SIS domain in the interval Asp19–Leu153. Catalysis depends on Glu200, which acts as the Proton acceptor. Residue His216 is the Proton donor of the active site. Arg296 acts as the Proton acceptor in catalysis.

It belongs to the PGI/PMI family.

The catalysed reaction is D-glucosamine 6-phosphate = D-galactosamine 6-phosphate. In terms of biological role, involved in the synthesis of UDP-N-acetylgalactosamine (UDP-GalNAc). Catalyzes the conversion of glucosamine-6-phosphate (GlcN-6-P) to galactosamine-6-phosphate (GalN-6-P). The protein is D-glucosamine-6-phosphate 4-epimerase of Sulfolobus acidocaldarius (strain ATCC 33909 / DSM 639 / JCM 8929 / NBRC 15157 / NCIMB 11770).